The chain runs to 405 residues: L-carnitine CoA-transferase (405 aa).

CoA-binding residues include K97 and R104. D169 acts as the Nucleophile in catalysis.

Belongs to the CoA-transferase III family. CaiB subfamily. Homodimer.

The protein localises to the cytoplasm. It carries out the reaction crotonobetainyl-CoA + (R)-carnitine = crotonobetaine + (R)-carnitinyl-CoA. The catalysed reaction is 4-(trimethylamino)butanoyl-CoA + (R)-carnitine = (R)-carnitinyl-CoA + 4-(trimethylamino)butanoate. It participates in amine and polyamine metabolism; carnitine metabolism. Catalyzes the reversible transfer of the CoA moiety from gamma-butyrobetainyl-CoA to L-carnitine to generate L-carnitinyl-CoA and gamma-butyrobetaine. Is also able to catalyze the reversible transfer of the CoA moiety from gamma-butyrobetainyl-CoA or L-carnitinyl-CoA to crotonobetaine to generate crotonobetainyl-CoA. This Escherichia coli O7:K1 (strain IAI39 / ExPEC) protein is L-carnitine CoA-transferase.